Here is a 592-residue protein sequence, read N- to C-terminus: Hepatocyte nuclear factor 1-alpha-B (592 aa).

A dimerization region spans residues 1 to 31 (MASQLSYLQQELLRALLESGVTKEALKKALA). One can recognise an HNF-p1 domain in the interval 1 to 32 (MASQLSYLQQELLRALLESGVTKEALKKALAD). Residues 54-78 (NCVQLPNGLGEPQMSEDESSDDGGD) form a disordered region. Acidic residues predominate over residues 67 to 77 (MSEDESSDDGG). Positions 85–180 (KELERLSPEE…IARQFTHAGH (96 aa)) constitute a POU-specific atypical domain. Interaction with DNA regions lie at residues 128-130 (QRE), 141-147 (HLSQHLN), 153-156 (KTQK), 201-204 (RFKW), 261-263 (RVY), and 268-271 (NSGK). The Nuclear localization signal signature appears at 195-203 (KKMRRNRFK). The segment at residues 197 to 277 (MRRNRFKWGP…NSGKEEAFRH (81 aa)) is a DNA-binding region (homeobox; HNF1-type). 2 stretches are compositionally biased toward polar residues: residues 284–295 (YNGQQSSAQPLS) and 306–328 (RYTQ…TLSP). Disordered regions lie at residues 284-329 (YNGQ…LSPS) and 511-533 (KQVV…HNQD).

It belongs to the HNF1 homeobox family. Binds DNA as dimer. Forms a homodimer or heterodimer with HNF1-alpha-A. Potentially also form a heterodimer with HNF1-beta. Liver.

It localises to the nucleus. Functionally, transcriptional activator that regulates the tissue specific expression of multiple genes, especially in pancreas and liver. Binds to the hepatocyte specific promoter element HP1. Binds to the inverted palindrome 5'-GTTAATNATTAAC-3'. This chain is Hepatocyte nuclear factor 1-alpha-B (hnf1a-b), found in Xenopus laevis (African clawed frog).